Here is a 396-residue protein sequence, read N- to C-terminus: NADH-quinone oxidoreductase subunit D 1 (396 aa).

The protein belongs to the complex I 49 kDa subunit family. As to quaternary structure, NDH-1 is composed of 14 different subunits. Subunits NuoB, C, D, E, F, and G constitute the peripheral sector of the complex.

The protein localises to the cell inner membrane. The catalysed reaction is a quinone + NADH + 5 H(+)(in) = a quinol + NAD(+) + 4 H(+)(out). Functionally, NDH-1 shuttles electrons from NADH, via FMN and iron-sulfur (Fe-S) centers, to quinones in the respiratory chain. The immediate electron acceptor for the enzyme in this species is believed to be ubiquinone. Couples the redox reaction to proton translocation (for every two electrons transferred, four hydrogen ions are translocated across the cytoplasmic membrane), and thus conserves the redox energy in a proton gradient. This chain is NADH-quinone oxidoreductase subunit D 1, found in Sinorhizobium medicae (strain WSM419) (Ensifer medicae).